The following is an 887-amino-acid chain: DNA mismatch repair protein MutS (887 aa).

626–633 (GPNMAGKS) is an ATP binding site.

Belongs to the DNA mismatch repair MutS family.

Functionally, this protein is involved in the repair of mismatches in DNA. It is possible that it carries out the mismatch recognition step. This protein has a weak ATPase activity. The protein is DNA mismatch repair protein MutS of Methanococcoides burtonii (strain DSM 6242 / NBRC 107633 / OCM 468 / ACE-M).